The following is a 286-amino-acid chain: Bifunctional protein FolD (286 aa).

Residues 165-167, Ser190, and Val231 each bind NADP(+); that span reads GRS.

The protein belongs to the tetrahydrofolate dehydrogenase/cyclohydrolase family. In terms of assembly, homodimer.

The enzyme catalyses (6R)-5,10-methylene-5,6,7,8-tetrahydrofolate + NADP(+) = (6R)-5,10-methenyltetrahydrofolate + NADPH. It carries out the reaction (6R)-5,10-methenyltetrahydrofolate + H2O = (6R)-10-formyltetrahydrofolate + H(+). It functions in the pathway one-carbon metabolism; tetrahydrofolate interconversion. In terms of biological role, catalyzes the oxidation of 5,10-methylenetetrahydrofolate to 5,10-methenyltetrahydrofolate and then the hydrolysis of 5,10-methenyltetrahydrofolate to 10-formyltetrahydrofolate. The sequence is that of Bifunctional protein FolD from Bacillus cytotoxicus (strain DSM 22905 / CIP 110041 / 391-98 / NVH 391-98).